A 187-amino-acid polypeptide reads, in one-letter code: Protein GrpE (187 aa).

The protein belongs to the GrpE family. In terms of assembly, homodimer.

It localises to the cytoplasm. Participates actively in the response to hyperosmotic and heat shock by preventing the aggregation of stress-denatured proteins, in association with DnaK and GrpE. It is the nucleotide exchange factor for DnaK and may function as a thermosensor. Unfolded proteins bind initially to DnaJ; upon interaction with the DnaJ-bound protein, DnaK hydrolyzes its bound ATP, resulting in the formation of a stable complex. GrpE releases ADP from DnaK; ATP binding to DnaK triggers the release of the substrate protein, thus completing the reaction cycle. Several rounds of ATP-dependent interactions between DnaJ, DnaK and GrpE are required for fully efficient folding. This Albidiferax ferrireducens (strain ATCC BAA-621 / DSM 15236 / T118) (Rhodoferax ferrireducens) protein is Protein GrpE.